The chain runs to 575 residues: SH2B adapter protein 3 (575 aa).

3 disordered regions span residues 1 to 23 (MNGPALQPSSPSSAPSASPAAAP), 83 to 136 (RAPG…CSFQ), and 150 to 176 (SAGELPAAHTAAAPGTPGEAAETPARP). S13 carries the post-translational modification Phosphoserine. Basic and acidic residues predominate over residues 83-93 (RAPGRDYRDTG). The segment covering 95 to 104 (GPPAKAEASP) has biased composition (low complexity). Phosphoserine occurs at positions 103, 120, and 150. Residues 152–174 (GELPAAHTAAAPGTPGEAAETPA) are compositionally biased toward low complexity. Residues 194 to 307 (EALKEAVLRY…WMAELSECTG (114 aa)) form the PH domain. The disordered stretch occupies residues 322–346 (ALEPSTSSSPRGSTDSLNQGASPGG). A compositionally biased stretch (low complexity) spans 325-337 (PSTSSSPRGSTDS). At S330 the chain carries Phosphoserine. The 99-residue stretch at 364–462 (WFHGPISRVK…ACDVRLSSYV (99 aa)) folds into the SH2 domain. 2 disordered regions span residues 503–525 (SSGCPRGLSPEGLPGRSSPPEQI) and 546–575 (PVNRARDSDYEMDSSSRSHLRAIDNQYTPL).

It belongs to the SH2B adapter family. Binds to the tyrosine-phosphorylated TCR zeta chain via its SH2 domain. Post-translationally, tyrosine phosphorylated by LCK. Preferentially expressed by lymphoid cell lines.

In terms of biological role, links T-cell receptor activation signal to phospholipase C-gamma-1, GRB2 and phosphatidylinositol 3-kinase. The chain is SH2B adapter protein 3 (SH2B3) from Homo sapiens (Human).